A 129-amino-acid chain; its full sequence is RutC family protein PM1466 (129 aa).

This sequence belongs to the RutC family.

The polypeptide is RutC family protein PM1466 (Pasteurella multocida (strain Pm70)).